We begin with the raw amino-acid sequence, 682 residues long: PWWP domain-containing DNA repair factor 3A (682 aa).

Ser-105 is subject to Phosphoserine. The segment at 121–145 is disordered; that stretch reads EKTDADVASQVSSAPSPSLLGEDGQ. Positions 127–140 are enriched in low complexity; it reads VASQVSSAPSPSLL. Ser-168 is subject to Phosphoserine. Disordered stretches follow at residues 179-318 and 334-369; these read GPKT…GAAP and GAGDKPEEDPVSSEESTGFKSTHSLLEEEEEEEEEP. Over residues 203–220 the composition is skewed to basic and acidic residues; it reads HGQESTTKKRQRNLGEKP. Phosphoserine occurs at positions 345 and 346. A compositionally biased stretch (polar residues) spans 346-357; that stretch reads SEESTGFKSTHS. In terms of domain architecture, PWWP spans 383–444; the sequence is VGMLVWLKYQ…KHFDCKEKHA (62 aa).

The protein belongs to the PWWP3A family. As to quaternary structure, interacts with TP53BP1 (via BRCT domain); the interaction is not dependent on its phosphorylation status. Binds nucleosomes. Interacts with trimethylated 'Lys-36' of histone H3 (H3K36me3) (in vitro).

The protein localises to the nucleus. In terms of biological role, involved in the DNA damage response pathway by contributing to the maintenance of chromatin architecture. Recruited to the vicinity of DNA breaks by TP53BP1 and plays an accessory role to facilitate damage-induced chromatin changes and promoting chromatin relaxation. Required for efficient DNA repair and cell survival following DNA damage. The sequence is that of PWWP domain-containing DNA repair factor 3A (Pwwp3a) from Mus musculus (Mouse).